Here is a 191-residue protein sequence, read N- to C-terminus: Orotate phosphoribosyltransferase (191 aa).

114–122 contacts 5-phospho-alpha-D-ribose 1-diphosphate; the sequence is EDVVTTGKS. Orotate contacts are provided by Thr118 and Arg146.

The protein belongs to the purine/pyrimidine phosphoribosyltransferase family. PyrE subfamily. Homodimer. It depends on Mg(2+) as a cofactor.

The catalysed reaction is orotidine 5'-phosphate + diphosphate = orotate + 5-phospho-alpha-D-ribose 1-diphosphate. Its pathway is pyrimidine metabolism; UMP biosynthesis via de novo pathway; UMP from orotate: step 1/2. Its function is as follows. Catalyzes the transfer of a ribosyl phosphate group from 5-phosphoribose 1-diphosphate to orotate, leading to the formation of orotidine monophosphate (OMP). This is Orotate phosphoribosyltransferase from Clostridium botulinum (strain ATCC 19397 / Type A).